Reading from the N-terminus, the 124-residue chain is Fluoride-specific ion channel FluC (124 aa).

4 helical membrane passes run 6–26 (FAVACGGVIGTLLRFALATWV), 34–54 (FYLATVAVNLLGCLLIGYLYA), 69–89 (ALIIGFLGALTTFSSFSLDAL), and 101–121 (FAYVGGSVLGGLLAAWAGLAL). Positions 76 and 79 each coordinate Na(+).

The protein belongs to the fluoride channel Fluc/FEX (TC 1.A.43) family.

It is found in the cell inner membrane. It catalyses the reaction fluoride(in) = fluoride(out). Its activity is regulated as follows. Na(+) is not transported, but it plays an essential structural role and its presence is essential for fluoride channel function. Functionally, fluoride-specific ion channel. Important for reducing fluoride concentration in the cell, thus reducing its toxicity. This is Fluoride-specific ion channel FluC from Stutzerimonas stutzeri (strain A1501) (Pseudomonas stutzeri).